We begin with the raw amino-acid sequence, 1696 residues long: PH domain leucine-rich repeat protein phosphatase 1 (1696 aa).

At Met1 the chain carries N-acetylmethionine. 2 disordered regions span residues 1–97 (MEPA…GGGA) and 222–398 (LGHG…VVGE). Positions 79 to 92 (VPQPAAGGAAPVTA) are enriched in low complexity. Polar residues predominate over residues 313–325 (DTESFSLSPSAES). Phosphoserine is present on Ser378. Residues 499 to 599 (RIQLSGMYNV…WLRQVSKVAS (101 aa)) enclose the PH domain. LRR repeat units follow at residues 601–622 (RISSVDLSCCSLEHLPANLFYS), 624–645 (DLTHLNLKQNFLRQNPSLPAAR), 655–676 (KLKSLNLSNNHLGAFPSAVCSI), 678–699 (TLAELNVSCNALQEVPAAVGAM), 701–722 (NLQTFLLDGNFLQSLPAELENM), 724–746 (QLSYLGLSFNEFTDIPEVLEKLT), 836–857 (FLKALYASSNELVQLDVYPVPN), 858–879 (YLSYMDVSRNCLESVPEWVCES), 881–902 (KLEVLDIGHNQICELPARLFCN), 904–925 (SLRKLLAGHNRLARLPERLERT), 926–947 (SVEVLDVQHNQIIELPPNLLMK), 950–971 (SLRFLNASANKLETLPPATLSE), 976–996 (ILQELYLTNNSLTDKCVPLLT), 1000–1021 (RLKILHMAYNRLQSFPASKMAK), 1024–1045 (ELEEIDISGNKLKAIPTTIMNC), 1047–1068 (RMHTVIAHSNCIEVFPEVMQLP), 1069–1090 (EVKCVDLSCNELSEITLPENLP), and 1092–1113 (KLQELDLTGNPRLALDHKSLEL). The PPM-type phosphatase domain maps to 1138 to 1385 (SHGYTEASGV…DSISAVVVQL (248 aa)). 4 residues coordinate Mn(2+): Asp1173, Gly1174, Lys1337, and Asp1376. 2 disordered regions span residues 1422-1473 (RPSD…SPAY) and 1610-1696 (KPGG…DTPL). Low complexity-rich tracts occupy residues 1431 to 1452 (SSSSGMASEISSELSTSEMSSE), 1647 to 1660 (QQQQQQQQQQQQQQ), and 1670 to 1680 (QAQAQAQAQAQ). The PDZ-binding signature appears at 1694–1696 (TPL).

Interacts with the nucleotide free form of K-Ras (KRAS) via its LRR repeats. Interacts with AKT2, AKT3 and PRKCB isoform beta-II. Interacts with WDR48 and USP12. Requires Mn(2+) as cofactor. Mainly present in brain (at protein level). Isoform 2 is more abundant in adult brain neurons than isoform 1 in. Isoforms 1 and 2 are expressed in the retina but not found in rod outer segments.

It is found in the cytoplasm. The protein localises to the membrane. Its subcellular location is the cell membrane. It localises to the nucleus. The protein resides in the nucleoplasm. It is found in the nucleus membrane. The enzyme catalyses O-phospho-L-seryl-[protein] + H2O = L-seryl-[protein] + phosphate. The catalysed reaction is O-phospho-L-threonyl-[protein] + H2O = L-threonyl-[protein] + phosphate. With respect to regulation, insensitive to okadaic acid. Deubiquitination by WDR48-USP12 complex positively regulates PHLPP1 stability. Its function is as follows. Protein phosphatase involved in regulation of Akt and PKC signaling. Mediates dephosphorylation in the C-terminal domain hydrophobic motif of members of the AGC Ser/Thr protein kinase family; specifically acts on 'Ser-473' of AKT2 and AKT3, 'Ser-660' of PRKCB and 'Ser-657' of PRKCA. Isoform 2 seems to have a major role in regulating Akt signaling in hippocampal neurons while isoform 1 may promote Akt and PKC activation and inhibit ERK signaling. Akt regulates the balance between cell survival and apoptosis through a cascade that primarily alters the function of transcription factors that regulate pro- and antiapoptotic genes. Dephosphorylation of 'Ser-473' of Akt triggers apoptosis and suppression of tumor growth. Dephosphorylation of PRKCA and PRKCB leads to their destabilization and degradation. Dephosphorylates STK4 on 'Thr-387' leading to STK4 activation and apoptosis. Dephosphorylates RPS6KB1 and is involved in regulation of cap-dependent translation. Inhibits cancer cell proliferation and may act as a tumor suppressor. Dephosphorylates RAF1 inhibiting its kinase activity. May act as a negative regulator of K-Ras signaling in membrane rafts. Involved in the hippocampus-dependent long-term memory formation. Involved in circadian control by regulating the consolidation of circadian periodicity after resetting. Involved in development and function of regulatory T-cells. The protein is PH domain leucine-rich repeat protein phosphatase 1 (Phlpp1) of Rattus norvegicus (Rat).